Consider the following 250-residue polypeptide: Hydroxyacylglutathione hydrolase (250 aa).

7 residues coordinate Zn(2+): His-53, His-55, Asp-57, His-58, His-111, Asp-128, and His-166.

The protein belongs to the metallo-beta-lactamase superfamily. Glyoxalase II family. Monomer. Zn(2+) is required as a cofactor.

The enzyme catalyses an S-(2-hydroxyacyl)glutathione + H2O = a 2-hydroxy carboxylate + glutathione + H(+). The protein operates within secondary metabolite metabolism; methylglyoxal degradation; (R)-lactate from methylglyoxal: step 2/2. Functionally, thiolesterase that catalyzes the hydrolysis of S-D-lactoyl-glutathione to form glutathione and D-lactic acid. This chain is Hydroxyacylglutathione hydrolase, found in Methylobacillus flagellatus (strain ATCC 51484 / DSM 6875 / VKM B-1610 / KT).